Consider the following 120-residue polypeptide: Dihydroneopterin aldolase (120 aa).

2 residues coordinate substrate: Glu20 and Met114.

The protein belongs to the archaeal dihydroneopterin aldolase family. As to quaternary structure, homotetramer.

It carries out the reaction 7,8-dihydroneopterin = 6-hydroxymethyl-7,8-dihydropterin + glycolaldehyde. In terms of biological role, catalyzes the conversion of 7,8-dihydroneopterin (H2Neo) to 6-hydroxymethyl-7,8-dihydropterin (6-HMD). The polypeptide is Dihydroneopterin aldolase (Picrophilus torridus (strain ATCC 700027 / DSM 9790 / JCM 10055 / NBRC 100828 / KAW 2/3)).